Consider the following 477-residue polypeptide: Bifunctional protein HldE (477 aa).

A ribokinase region spans residues 1 to 318 (MKVTLPEFER…ENAVRGRADT (318 aa)). Residue Lys-179 is modified to N6-acetyllysine. 195 to 198 (NLSE) provides a ligand contact to ATP. Asp-264 is an active-site residue. The interval 344-477 (MTNGVFDILH…IKKIQQDKKG (134 aa)) is cytidylyltransferase.

In the N-terminal section; belongs to the carbohydrate kinase PfkB family. The protein in the C-terminal section; belongs to the cytidylyltransferase family. As to quaternary structure, homodimer.

It catalyses the reaction D-glycero-beta-D-manno-heptose 7-phosphate + ATP = D-glycero-beta-D-manno-heptose 1,7-bisphosphate + ADP + H(+). It carries out the reaction D-glycero-beta-D-manno-heptose 1-phosphate + ATP + H(+) = ADP-D-glycero-beta-D-manno-heptose + diphosphate. It functions in the pathway nucleotide-sugar biosynthesis; ADP-L-glycero-beta-D-manno-heptose biosynthesis; ADP-L-glycero-beta-D-manno-heptose from D-glycero-beta-D-manno-heptose 7-phosphate: step 1/4. The protein operates within nucleotide-sugar biosynthesis; ADP-L-glycero-beta-D-manno-heptose biosynthesis; ADP-L-glycero-beta-D-manno-heptose from D-glycero-beta-D-manno-heptose 7-phosphate: step 3/4. In terms of biological role, catalyzes the phosphorylation of D-glycero-D-manno-heptose 7-phosphate at the C-1 position to selectively form D-glycero-beta-D-manno-heptose-1,7-bisphosphate. Its function is as follows. Catalyzes the ADP transfer from ATP to D-glycero-beta-D-manno-heptose 1-phosphate, yielding ADP-D-glycero-beta-D-manno-heptose. This chain is Bifunctional protein HldE, found in Escherichia coli O9:H4 (strain HS).